Here is an 833-residue protein sequence, read N- to C-terminus: Ventricular zone-expressed PH domain-containing protein 1 (833 aa).

Interaction with TGFBR1 regions lie at residues 201–319 (AELL…LANM) and 663–833 (ESTF…TTYL). The region spanning 716–819 (QPLIEGKLKE…WLQCINVALA (104 aa)) is the PH domain.

Belongs to the MELT/VEPH family. As to quaternary structure, interacts with TGFBR1. In terms of tissue distribution, specifically expressed in kidney and eye. In the eye, expressed in retinal pigmented epithelium but not in the neural retina.

The protein localises to the cell membrane. Functionally, interacts with TGF-beta receptor type-1 (TGFBR1) and inhibits dissociation of activated SMAD2 from TGFBR1, impeding its nuclear accumulation and resulting in impaired TGF-beta signaling. May also affect FOXO, Hippo and Wnt signaling. In Mus musculus (Mouse), this protein is Ventricular zone-expressed PH domain-containing protein 1 (Veph1).